A 379-amino-acid polypeptide reads, in one-letter code: Ribosomal RNA large subunit methyltransferase G (379 aa).

This sequence belongs to the methyltransferase superfamily. RlmG family.

The protein localises to the cytoplasm. It carries out the reaction guanosine(1835) in 23S rRNA + S-adenosyl-L-methionine = N(2)-methylguanosine(1835) in 23S rRNA + S-adenosyl-L-homocysteine + H(+). Functionally, specifically methylates the guanine in position 1835 (m2G1835) of 23S rRNA. This is Ribosomal RNA large subunit methyltransferase G from Pectobacterium atrosepticum (strain SCRI 1043 / ATCC BAA-672) (Erwinia carotovora subsp. atroseptica).